We begin with the raw amino-acid sequence, 1338 residues long: Protein dispatched homolog 3 (1338 aa).

The Cytoplasmic portion of the chain corresponds to 1–67 (MDTEDDPLLQ…VGWIFTNPYC (67 aa)). The chain crosses the membrane as a helical span at residues 68–88 (AGFILFLGCAIPAVLAVVMFL). The Lumenal segment spans residues 89-406 (HYPALDIDIS…YEVRRTFNND (318 aa)). Positions 164–196 (TRAKRSAPQGRTSSPEPRAHPHPGNETSRVTRG) are disordered. Residues 401–559 (RTFNNDMLLA…LFTMPAALGI (159 aa)) enclose the SSD domain. Residues 407 to 427 (MLLAFISSSCIAVLVYILTSC) traverse the membrane as a helical segment. Residue Ser-428 is a topological domain, cytoplasmic. Residues 429 to 449 (VFLSFFGIASIGLSCLVALFL) traverse the membrane as a helical segment. Residues 450–452 (YHV) lie on the Lumenal side of the membrane. The chain crosses the membrane as a helical span at residues 453–473 (VFGIQYLGILNGVAAFVIVGI). Over 474–517 (GVDDVFVFINTYRQATHLKDLRLRMIHTIQTAGKATFFTSLTTA) the chain is Cytoplasmic. A helical transmembrane segment spans residues 518–538 (AAYAANIFSQIPAVHDFGLFM). Ser-539 is a topological domain (lumenal). Residues 540 to 560 (LIVSCCWVAVLFTMPAALGIW) traverse the membrane as a helical segment. The Cytoplasmic segment spans residues 561-672 (TLYVSPLESS…WVLWSAVKSR (112 aa)). A helical transmembrane segment spans residues 673 to 693 (WVIVGLFLLVLLLSIFFASRL). The Lumenal portion of the chain corresponds to 694 to 1128 (RPASRAPVLF…IFMEIIGVQS (435 aa)). Positions 747–768 (SLEKKKRGSASPWGSKGSISDT) are disordered. Residues 1129–1149 (ALYGLILSLVICVAAVAVFTT) traverse the membrane as a helical segment. Residue His-1150 is a topological domain, cytoplasmic. A helical transmembrane segment spans residues 1151-1171 (ILLLLPVLLSILGVVCLVVTI). Over 1172 to 1237 (MYWSGWEMGA…TIEAIRHVGV (66 aa)) the chain is Lumenal. A helical transmembrane segment spans residues 1238–1258 (AIVSSAVTTVIATVPLFFCII). The Cytoplasmic segment spans residues 1259-1266 (APFAKFGK). The helical transmembrane segment at 1267-1287 (IVALNTGVSILYTLTVSTALL) threads the bilayer. Residues 1288-1302 (SIMGPGTFTRSRTSC) are Lumenal-facing. A helical membrane pass occupies residues 1303–1323 (LKAVAGVLLAGLLGLCICLAL). Residues 1324 to 1338 (LKGGFKIPLPNGTAL) are Cytoplasmic-facing.

Belongs to the patched family. In terms of tissue distribution, expressed in retina, hippocampus and cerebellum. Expressed in the ganglion and bipolar cells of the inner and outer nuclear layers of the retina and in Purkinje cells (at protein level). Expressed strongly in brain and retina, weakly in testis and bone marrow.

It localises to the endoplasmic reticulum membrane. The protein resides in the nucleus membrane. The protein localises to the cytoplasmic vesicle membrane. In terms of biological role, plays a role in neuronal proliferation and differentiation. Plays a role in the accumulation of cellular cholesterol. Involved in intracellular lipid droplet formation. May contribute to cholesterol homeostasis in neuronal cells. The sequence is that of Protein dispatched homolog 3 from Gallus gallus (Chicken).